A 198-amino-acid chain; its full sequence is Undecaprenyl phosphate transporter A (198 aa).

The next 5 helical transmembrane spans lie at 15–35 (MGYAGIAIGLMIEIIPSEIVL), 47–67 (IGFIGAIIAGVIGGTIAQIFI), 107–127 (VVFSARFIPVVRHAISIPAGI), 135–155 (FVVLTVLAIIPWSILFVYLGI), and 169–189 (GTYTTPIMILAVVVIALYFVI).

This sequence belongs to the DedA family.

The protein localises to the cell membrane. Functionally, flippase that catalyzes the transport of undecaprenyl phosphate (UndP) across the cytoplasmic membrane, from the external side to the cytoplasmic side. Is involved in UndP recycling during peptidoglycan synthesis. This chain is Undecaprenyl phosphate transporter A, found in Bacillus subtilis (strain 168).